We begin with the raw amino-acid sequence, 341 residues long: Heat-shock protein cognate (HSC) co-chaperone sgt12 (341 aa).

The segment at Pro-86–Ala-123 is disordered. 3 TPR repeats span residues Ser-114–Asn-147, Pro-148–Tyr-181, and Ser-182–Gly-215. The tract at residues Glu-232 to Asp-280 is disordered. Gly residues predominate over residues Gly-269–Met-278.

It belongs to the SGT family. Forms homodimers. Component of the get4/get5/sgt2 sorting complex. Dimers of sgt2 bind directly a single get5. Binds HSC family members ssa1, sse1, hsp104 and hsc82 via its TPR domain.

The protein localises to the cytoplasm. Heat-shock protein cognate (HSC) co-chaperone that preferentially binds endoplasmic reticulum-destined tail-anchored (TA) proteins and directs them to the GET (guided entry of TA proteins) pathway via get4 and get5. Get4 and get5 form an obligate complex that catalyzes the transfer of tail-anchored proteins destined to the endoplasmic reticulum from sgt2 to the cytosolic targeting factor which then targets the TA protein to the ER membrane via get1/get2. This is Heat-shock protein cognate (HSC) co-chaperone sgt12 from Aspergillus fumigatus (strain ATCC MYA-4609 / CBS 101355 / FGSC A1100 / Af293) (Neosartorya fumigata).